Consider the following 304-residue polypeptide: Glycine--tRNA ligase alpha subunit (304 aa).

It belongs to the class-II aminoacyl-tRNA synthetase family. In terms of assembly, tetramer of two alpha and two beta subunits.

The protein resides in the cytoplasm. The enzyme catalyses tRNA(Gly) + glycine + ATP = glycyl-tRNA(Gly) + AMP + diphosphate. The protein is Glycine--tRNA ligase alpha subunit of Pectobacterium atrosepticum (strain SCRI 1043 / ATCC BAA-672) (Erwinia carotovora subsp. atroseptica).